The following is a 540-amino-acid chain: Putative laccase-11 (540 aa).

Plastocyanin-like domains are found at residues 1 to 114 (MATV…PPRG), 124 to 279 (REVP…YYGA), and 389 to 523 (NFPA…NDGP). H48, H50, H93, and H95 together coordinate Cu cation. 7 residues coordinate Cu cation: H440, H443, H445, H502, C503, H504, and H508.

This sequence belongs to the multicopper oxidase family. The cofactor is Cu cation.

The protein resides in the secreted. It localises to the extracellular space. Its subcellular location is the apoplast. It catalyses the reaction 4 hydroquinone + O2 = 4 benzosemiquinone + 2 H2O. Functionally, lignin degradation and detoxification of lignin-derived products. The chain is Putative laccase-11 (LAC11) from Oryza sativa subsp. japonica (Rice).